A 130-amino-acid chain; its full sequence is Small ribosomal subunit protein uS9 (130 aa).

Residues 105 to 130 (TRDARMKERKKPGLKKARKASQFSKR) are disordered. Basic residues predominate over residues 111-130 (KERKKPGLKKARKASQFSKR).

The protein belongs to the universal ribosomal protein uS9 family.

This Lactiplantibacillus plantarum (strain ATCC BAA-793 / NCIMB 8826 / WCFS1) (Lactobacillus plantarum) protein is Small ribosomal subunit protein uS9.